The primary structure comprises 876 residues: Exosome complex component 10 homolog (876 aa).

The interval 1–22 is disordered; sequence MSGEESMPDEEQKQSEEEEEMI. The region spanning 279 to 445 is the 3'-5' exonuclease domain; it reads TMIDTKEKLE…YSYDMLREQL (167 aa). Residues Asp303, Glu305, Asp361, and Asp430 each contribute to the Mg(2+) site. An HRDC domain is found at 489–569; the sequence is NTRQDYALTH…VEARDVKLEK (81 aa). Composition is skewed to basic and acidic residues over residues 690 to 730, 741 to 752, and 834 to 847; these read EKQE…EFDA, VPDDPNKPKDPE, and KPVRDNNADFDPFH. Residues 690–876 form a disordered region; sequence EKQEEEERKE…NRQGTINYKK (187 aa). Basic residues predominate over residues 848–861; that stretch reads QKYRLKNKTKKNMA.

The protein belongs to the exosome component 10/RRP6 family. Component of the RNA exosome complex. Interacts with crn-5. It depends on Mg(2+) as a cofactor. In terms of tissue distribution, ubiquitously expressed.

It is found in the nucleus. It localises to the nucleolus. The protein resides in the nucleoplasm. Its function is as follows. Catalytic component of the RNA exosome complex which has 3'-&gt;5' exoribonuclease activity and participates in a multitude of cellular RNA processing and degradation events. Involved in apoptotic DNA degradation. Involved in regulation of antisense ribosomal siRNA production. Involved in response to cold-warm shock. The protein is Exosome complex component 10 homolog of Caenorhabditis elegans.